The sequence spans 383 residues: Lipid-A-disaccharide synthase (383 aa).

This sequence belongs to the LpxB family.

The catalysed reaction is a lipid X + a UDP-2-N,3-O-bis[(3R)-3-hydroxyacyl]-alpha-D-glucosamine = a lipid A disaccharide + UDP + H(+). Its pathway is bacterial outer membrane biogenesis; LPS lipid A biosynthesis. Condensation of UDP-2,3-diacylglucosamine and 2,3-diacylglucosamine-1-phosphate to form lipid A disaccharide, a precursor of lipid A, a phosphorylated glycolipid that anchors the lipopolysaccharide to the outer membrane of the cell. This chain is Lipid-A-disaccharide synthase, found in Anaeromyxobacter dehalogenans (strain 2CP-1 / ATCC BAA-258).